A 213-amino-acid polypeptide reads, in one-letter code: Maleylacetoacetate isomerase (213 aa).

One can recognise a GST N-terminal domain in the interval 3 to 84 (NETVLYDYWR…YLAETRDGTG (82 aa)). Positions 89–213 (HPIDRQRVRA…QRAHPDRAKP (125 aa)) constitute a GST C-terminal domain.

It belongs to the GST superfamily. Zeta family.

The enzyme catalyses 4-maleylacetoacetate = 4-fumarylacetoacetate. Its pathway is amino-acid degradation; L-phenylalanine degradation; acetoacetate and fumarate from L-phenylalanine: step 5/6. The protein is Maleylacetoacetate isomerase (maiA) of Rhizobium meliloti (strain 1021) (Ensifer meliloti).